The chain runs to 364 residues: tRNA-specific 2-thiouridylase MnmA (364 aa).

Residues 6–13 (AMSGGVDS) and Leu32 contribute to the ATP site. Cys101 serves as the catalytic Nucleophile. A disulfide bridge links Cys101 with Cys193. Gly125 serves as a coordination point for ATP. The interaction with tRNA stretch occupies residues 143-145 (KDQ). Cys193 acts as the Cysteine persulfide intermediate in catalysis.

Belongs to the MnmA/TRMU family.

The protein resides in the cytoplasm. It catalyses the reaction S-sulfanyl-L-cysteinyl-[protein] + uridine(34) in tRNA + AH2 + ATP = 2-thiouridine(34) in tRNA + L-cysteinyl-[protein] + A + AMP + diphosphate + H(+). Functionally, catalyzes the 2-thiolation of uridine at the wobble position (U34) of tRNA, leading to the formation of s(2)U34. This is tRNA-specific 2-thiouridylase MnmA from Rhodococcus opacus (strain B4).